The primary structure comprises 362 residues: Oryzain gamma chain (362 aa).

Residues 1–24 (MAHRRIILLLAAAAVAATSAVAAA) form the signal peptide. Residues 25 to 144 (SSGFDDSNPI…GNHRMRDAAA (120 aa)) constitute a propeptide, activation peptide. The N-linked (GlcNAc...) asparagine glycan is linked to N128. 2 cysteine pairs are disulfide-bonded: C166-C209 and C200-C242. C169 is a catalytic residue. N-linked (GlcNAc...) asparagine glycosylation occurs at N258. A disulfide bond links C300 and C350. Active-site residues include H309 and N329.

The protein belongs to the peptidase C1 family. In terms of tissue distribution, expressed only in seeds.

The chain is Oryzain gamma chain from Oryza sativa subsp. japonica (Rice).